The primary structure comprises 405 residues: Tryptophan synthase beta chain (405 aa).

N6-(pyridoxal phosphate)lysine is present on K98.

The protein belongs to the TrpB family. In terms of assembly, tetramer of two alpha and two beta chains. Requires pyridoxal 5'-phosphate as cofactor.

The catalysed reaction is (1S,2R)-1-C-(indol-3-yl)glycerol 3-phosphate + L-serine = D-glyceraldehyde 3-phosphate + L-tryptophan + H2O. Its pathway is amino-acid biosynthesis; L-tryptophan biosynthesis; L-tryptophan from chorismate: step 5/5. Functionally, the beta subunit is responsible for the synthesis of L-tryptophan from indole and L-serine. The polypeptide is Tryptophan synthase beta chain (Stenotrophomonas maltophilia (strain R551-3)).